The primary structure comprises 955 residues: Kinesin-like protein K39 (955 aa).

The Kinesin motor domain occupies 12 to 392 (RVKVSVRVRP…LRYASRARDI (381 aa)). ATP is bound at residue 122-129 (GQTGSGKT). A coiled-coil region spans residues 426-955 (PAYVSELKKK…EERAAELASQ (530 aa)). 2 disordered regions span residues 682–712 (ELDA…RESE) and 725–955 (TAAA…LASQ). Tandem repeats lie at residues 704–742 (LEQQ…TRAT), 743–781 (LEQQ…TRAT), 782–820 (LEQQ…TRAT), 821–859 (LEQQ…TRAT), 860–898 (LEQQ…TRAT), 899–937 (LEQQ…TRAA), and 938–955 (LEQQ…LASQ). The tract at residues 704 to 955 (LEQQLRESEE…EERAAELASQ (252 aa)) is 7 X 39 AA approximate tandem repeats. Composition is skewed to basic and acidic residues over residues 785–794 (QLRDSEERAA), 824–833 (QLRDSEERAA), 863–872 (QLRESEERAA), 902–911 (QLRDSEERAA), and 941–955 (QLRD…LASQ).

It belongs to the TRAFAC class myosin-kinesin ATPase superfamily. Kinesin family.

It is found in the cytoplasm. Its subcellular location is the cytoskeleton. The protein is Kinesin-like protein K39 (KIN) of Leishmania chagasi.